Consider the following 654-residue polypeptide: Broad substrate specificity ATP-binding cassette transporter ABCG2 (654 aa).

Residues 1-394 (MSSSNVEVFI…KNLLGNPQAS (394 aa)) lie on the Cytoplasmic side of the membrane. One can recognise an ABC transporter domain in the interval 37 to 286 (LSFHNICYRV…FESAGYHCEA (250 aa)). ATP contacts are provided by residues 80–87 (GPTGGGKS), 184–190 (RGVSGGE), Glu211, and His243. In terms of domain architecture, ABC transmembrane type-2 spans 388–650 (LGNPQASIAQ…TIAYLKLLFL (263 aa)). A helical transmembrane segment spans residues 395 to 415 (IAQIIVTVILGLVIGAIYFGL). At 416-427 (NNDSTGIQNRAG) the chain is on the extracellular side. An N-linked (GlcNAc...) asparagine glycan is attached at Asn417. The chain crosses the membrane as a helical span at residues 428-448 (VLFFLTTNQCFSSVSAVELFV). Residues 449-476 (VEKKLFIHEYISGYYRVSSYFFGKLLSD) lie on the Cytoplasmic side of the membrane. Residues 477-497 (LLPMRMLPSIIFTCIVYFMLG) traverse the membrane as a helical segment. Topologically, residues 498 to 505 (LKPTADAF) are extracellular. Residues 506 to 526 (FIMMFTLMMVAYSASSMALAI) traverse the membrane as a helical segment. At 527–534 (AAGQSVVS) the chain is on the cytoplasmic side. Residues 535–555 (VATLLMTICFVFMMIFSGLLV) form a helical membrane-spanning segment. Asn556, Asn595, and Asn599 each carry an N-linked (GlcNAc...) asparagine glycan. Residues 556-629 (NLTTIASWLS…LSPWGLWKNH (74 aa)) are Extracellular-facing. An intrachain disulfide couples Cys591 to Cys607. The helical transmembrane segment at 630-650 (VALACMIVIFLTIAYLKLLFL) threads the bilayer. The Cytoplasmic segment spans residues 651–654 (KKYS).

Belongs to the ABC transporter superfamily. ABCG family. Eye pigment precursor importer (TC 3.A.1.204) subfamily. In terms of assembly, homodimer; disulfide-linked. The minimal functional unit is a homodimer, but the major oligomeric form in plasma membrane is a homotetramer with possibility of higher order oligomerization up to homododecamers. In terms of processing, N-glycosylated. Glycosylation-deficient ABCG2 is normally expressed and functional. Phosphorylated. Phosphorylation may regulate the localization to the plasma membrane, the homooligomerization and therefore, the activity of the transporter.

The protein resides in the cell membrane. It is found in the apical cell membrane. Its subcellular location is the mitochondrion membrane. It carries out the reaction ATP + H2O + xenobioticSide 1 = ADP + phosphate + xenobioticSide 2.. It catalyses the reaction urate(in) + ATP + H2O = urate(out) + ADP + phosphate + H(+). The catalysed reaction is indoxyl sulfate(in) + ATP + H2O = indoxyl sulfate(out) + ADP + phosphate + H(+). The enzyme catalyses sphing-4-enine 1-phosphate(in) + ATP + H2O = sphing-4-enine 1-phosphate(out) + ADP + phosphate + H(+). It carries out the reaction estrone 3-sulfate(in) + ATP + H2O = estrone 3-sulfate(out) + ADP + phosphate + H(+). It catalyses the reaction dehydroepiandrosterone 3-sulfate(in) + ATP + H2O = dehydroepiandrosterone 3-sulfate(out) + ADP + phosphate + H(+). The catalysed reaction is 4-methylumbelliferone sulfate(in) + ATP + H2O = 4-methylumbelliferone sulfate(out) + ADP + phosphate + H(+). The enzyme catalyses 5,7-dimethyl-2-methylamino-4-(3-pyridylmethyl)-1,3-benzothiazol-6-yl beta-D-glucuronate(in) + ATP + H2O = 5,7-dimethyl-2-methylamino-4-(3-pyridylmethyl)-1,3-benzothiazol-6-yl beta-D-glucuronate(out) + ADP + phosphate + H(+). It carries out the reaction 4-methylumbelliferone beta-D-glucuronate(in) + ATP + H2O = 4-methylumbelliferone beta-D-glucuronate(out) + ADP + phosphate + H(+). It catalyses the reaction 5,7-dimethyl-2-methylamino-4-(3-pyridylmethyl)-1,3-benzothiazol-6-yl sulfate(in) + ATP + H2O = 5,7-dimethyl-2-methylamino-4-(3-pyridylmethyl)-1,3-benzothiazol-6-yl sulfate(out) + ADP + phosphate + H(+). The catalysed reaction is 17beta-estradiol 17-O-(beta-D-glucuronate)(in) + ATP + H2O = 17beta-estradiol 17-O-(beta-D-glucuronate)(out) + ADP + phosphate + H(+). The enzyme catalyses methotrexate(in) + ATP + H2O = methotrexate(out) + ADP + phosphate + H(+). It carries out the reaction riboflavin(in) + ATP + H2O = riboflavin(out) + ADP + phosphate + H(+). It catalyses the reaction pheophorbide a(in) + ATP + H2O = pheophorbide a(out) + ADP + phosphate + H(+). The catalysed reaction is itaconate(in) + ATP + H2O = itaconate(out) + ADP + phosphate + H(+). In terms of biological role, broad substrate specificity ATP-dependent transporter of the ATP-binding cassette (ABC) family that actively extrudes a wide variety of physiological compounds, dietary toxins and xenobiotics from cells. Involved in porphyrin homeostasis, mediating the export of protoporphyrin IX (PPIX) from both mitochondria to cytosol and cytosol to extracellular space, it also functions in the cellular export of heme. Also mediates the efflux of sphingosine-1-P from cells. Acts as a urate exporter functioning in both renal and extrarenal urate excretion. In kidney, it also functions as a physiological exporter of the uremic toxin indoxyl sulfate. Also involved in the excretion of steroids like estrone 3-sulfate/E1S, 3beta-sulfooxy-androst-5-en-17-one/DHEAS, and other sulfate conjugates. Mediates the secretion of the riboflavin and biotin vitamins into milk. Extrudes pheophorbide a, a phototoxic porphyrin catabolite of chlorophyll, reducing its bioavailability. Plays an important role in the exclusion of xenobiotics from the brain. It confers to cells a resistance to multiple drugs and other xenobiotics including mitoxantrone, pheophorbide, camptothecin, methotrexate, azidothymidine, and the anthracyclines daunorubicin and doxorubicin, through the control of their efflux. In placenta, it limits the penetration of drugs from the maternal plasma into the fetus. May play a role in early stem cell self-renewal by blocking differentiation. In inflammatory macrophages, exports itaconate from the cytosol to the extracellular compartment and limits the activation of TFEB-dependent lysosome biogenesis involved in antibacterial innate immune response. This is Broad substrate specificity ATP-binding cassette transporter ABCG2 (ABCG2) from Macaca mulatta (Rhesus macaque).